A 162-amino-acid polypeptide reads, in one-letter code: MDEAYYSGNLESVLGYVSDMHTELASISQLVIAKIETIDNDILNKDIVNFIMCRSNLDNPFISFLDTVYTIIDQENYQTELINSLDDNEIIDCIVNKFMSFYKDNLENIVDAIITLKYIMNNPDFKTTYAEVLGSRIADIDIKQVIRENILQLSNDIRERYL.

This sequence belongs to the poxviridae A49 protein family. In terms of assembly, interacts with host BTRC; this interaction inhibits NF-kappa-B activation.

It is found in the host cytoplasm. It localises to the host nucleus. In terms of biological role, plays a role in the inhibition of host NF-kappa-B activation. Interacts with host BTRC and thereby diminishes ubiquitination of NF-kappa-B inhibitor alpha/NFKBIA. This stabilizes NFKBIA and its interaction with NF-kappaB, so retaining p65/RELA in the cytoplasm and preventing NF-kappa-B-dependent gene expression. This Bos taurus (Bovine) protein is Protein A49R.